The following is a 612-amino-acid chain: UvrABC system protein C (612 aa).

In terms of domain architecture, GIY-YIG spans 21–99 (KLPGVYQMYD…IKSQKPPFNI (79 aa)). Residues 209–244 (EVLQQELQVEMEQASQALDFERAVVVRDQITDLRQV) form the UVR domain.

It belongs to the UvrC family. In terms of assembly, interacts with UvrB in an incision complex.

The protein resides in the cytoplasm. The UvrABC repair system catalyzes the recognition and processing of DNA lesions. UvrC both incises the 5' and 3' sides of the lesion. The N-terminal half is responsible for the 3' incision and the C-terminal half is responsible for the 5' incision. This chain is UvrABC system protein C, found in Saccharophagus degradans (strain 2-40 / ATCC 43961 / DSM 17024).